The sequence spans 50 residues: Large ribosomal subunit protein bL33A (50 aa).

It belongs to the bacterial ribosomal protein bL33 family.

In Streptococcus thermophilus (strain CNRZ 1066), this protein is Large ribosomal subunit protein bL33A.